Consider the following 238-residue polypeptide: MKAVLALATLIGSTLASSCSSTALSCSNSANSDTCCSPEYGLVVLNMQWAPGYGPDNAFTLHGLWPDKCSGAYAPSGGCDSNRASSSIASVIKSKDSSLYNSMLTYWPSNQGNNNVFWSHEWSKHGTCVSTYDPDCYDNYEEGEDIVDYFQKAMDLRSQYNVYKAFSSNGITPGGTYTATEMQSAIESYFGAKAKIDCSSGTLSDVALYFYVRGRDTYVITDALSTGSCSGDVEYPTK.

Positions 1 to 16 (MKAVLALATLIGSTLA) are cleaved as a signal peptide. 5 disulfides stabilise this stretch: Cys19–Cys36, Cys26–Cys69, Cys35–Cys136, Cys79–Cys128, and Cys198–Cys229. Residues His62, Glu121, and His125 contribute to the active site.

Belongs to the RNase T2 family.

It catalyses the reaction a ribonucleotidyl-ribonucleotide-RNA + H2O = a 3'-end 3'-phospho-ribonucleotide-RNA + a 5'-end dephospho-ribonucleoside-RNA + H(+). This is a base non-specific ribonuclease. This is Ribonuclease Rh from Rhizopus niveus.